A 327-amino-acid chain; its full sequence is L-lactate dehydrogenase 1 (327 aa).

NAD(+) is bound by residues V21, D42, K47, Y72, and 86-87 (GA). Substrate is bound by residues Q89, R95, and 127–130 (NPVD). NAD(+)-binding positions include 125–127 (AAN) and S150. 155-158 (DSAR) serves as a coordination point for substrate. Residues R160 and H175 each contribute to the beta-D-fructose 1,6-bisphosphate site. The Proton acceptor role is filled by H182. Y227 is subject to Phosphotyrosine. T236 is a binding site for substrate.

It belongs to the LDH/MDH superfamily. LDH family. In terms of assembly, homotetramer.

The protein resides in the cytoplasm. The catalysed reaction is (S)-lactate + NAD(+) = pyruvate + NADH + H(+). It participates in fermentation; pyruvate fermentation to lactate; (S)-lactate from pyruvate: step 1/1. Allosterically activated by fructose 1,6-bisphosphate (FBP). Catalyzes the conversion of lactate to pyruvate. The chain is L-lactate dehydrogenase 1 from Enterococcus faecalis (strain ATCC 700802 / V583).